Here is a 359-residue protein sequence, read N- to C-terminus: tRNA N6-adenosine threonylcarbamoyltransferase (359 aa).

Fe cation is bound by residues His115 and His119. Substrate contacts are provided by residues Leu137–Gly141, Asp170, Gly183, and Asn283. Asp311 provides a ligand contact to Fe cation. A disordered region spans residues Ala328 to Ala359.

The protein belongs to the KAE1 / TsaD family. Fe(2+) serves as cofactor.

It is found in the cytoplasm. The catalysed reaction is L-threonylcarbamoyladenylate + adenosine(37) in tRNA = N(6)-L-threonylcarbamoyladenosine(37) in tRNA + AMP + H(+). Its function is as follows. Required for the formation of a threonylcarbamoyl group on adenosine at position 37 (t(6)A37) in tRNAs that read codons beginning with adenine. Is involved in the transfer of the threonylcarbamoyl moiety of threonylcarbamoyl-AMP (TC-AMP) to the N6 group of A37, together with TsaE and TsaB. TsaD likely plays a direct catalytic role in this reaction. In Brucella ovis (strain ATCC 25840 / 63/290 / NCTC 10512), this protein is tRNA N6-adenosine threonylcarbamoyltransferase.